Here is a 277-residue protein sequence, read N- to C-terminus: B3 domain-containing protein At3g19184 (277 aa).

Positions Q33–R94 are disordered. The TF-B3 DNA-binding region spans F130–N221. Residues A224–E250 show a composition bias toward acidic residues. The disordered stretch occupies residues A224–K277. The segment covering S251–Q264 has biased composition (basic and acidic residues). Basic residues predominate over residues S268–K277.

It localises to the nucleus. This chain is B3 domain-containing protein At3g19184, found in Arabidopsis thaliana (Mouse-ear cress).